Reading from the N-terminus, the 185-residue chain is Ribosome-recycling factor (185 aa).

It belongs to the RRF family.

Its subcellular location is the cytoplasm. In terms of biological role, responsible for the release of ribosomes from messenger RNA at the termination of protein biosynthesis. May increase the efficiency of translation by recycling ribosomes from one round of translation to another. This is Ribosome-recycling factor from Legionella pneumophila (strain Paris).